The primary structure comprises 179 residues: Apoptosis regulator Bcl-2 homolog (179 aa).

Residues glutamate 76–alanine 95 carry the BH1 motif. The BH2 signature appears at proline 126–serine 141.

It belongs to the Bcl-2 family. As to quaternary structure, interacts with host BECN1 (via BH3 homology domain); this interaction allows the virus to inhibit BECN1, and thus autophagy. Interacts with host BID. Interacts with host BAX.

It localises to the host mitochondrion. The protein localises to the host endoplasmic reticulum. Functionally, suppresses apoptosis in host cell to promote the viral replication. Has the ability to potentially bind to all the members of the proapoptotic Bcl-2 family. Inhibits autophagy by interacting with host Beclin 1 (BECN1). The protein is Apoptosis regulator Bcl-2 homolog of African swine fever virus (isolate Pig/Kenya/KEN-50/1950) (ASFV).